The chain runs to 722 residues: Probable cation-transporting ATPase HI_0290 (722 aa).

The HMA domain occupies 9–75; that stretch reads KKISIQIGGM…IIHKTGFSAH (67 aa). The a metal cation site is built by cysteine 20 and cysteine 23. 6 helical membrane-spanning segments follow: residues 94–114, 118–138, 157–177, 180–200, 340–360, and 373–393; these read LIVL…MIGG, LMLP…WLAI, VLVS…LFYH, HAMG…VSLG, VFVP…YILT, and VLVI…IMVG. The active-site 4-aspartylphosphate intermediate is aspartate 422. A run of 4 helical transmembrane segments spans residues 523-543, 608-628, 675-695, and 697-717; these read IWQI…GAFA, LGHI…LASA, LFFA…GFLS, and IIAG…ALRL. Mg(2+)-binding residues include aspartate 617 and aspartate 621.

The protein belongs to the cation transport ATPase (P-type) (TC 3.A.3) family. Type IB subfamily.

It localises to the cell membrane. It catalyses the reaction ATP + H2O = ADP + phosphate + H(+). The sequence is that of Probable cation-transporting ATPase HI_0290 from Haemophilus influenzae (strain ATCC 51907 / DSM 11121 / KW20 / Rd).